A 264-amino-acid chain; its full sequence is 3-deoxy-manno-octulosonate cytidylyltransferase (264 aa).

It belongs to the KdsB family.

Its subcellular location is the cytoplasm. It carries out the reaction 3-deoxy-alpha-D-manno-oct-2-ulosonate + CTP = CMP-3-deoxy-beta-D-manno-octulosonate + diphosphate. It participates in nucleotide-sugar biosynthesis; CMP-3-deoxy-D-manno-octulosonate biosynthesis; CMP-3-deoxy-D-manno-octulosonate from 3-deoxy-D-manno-octulosonate and CTP: step 1/1. The protein operates within bacterial outer membrane biogenesis; lipopolysaccharide biosynthesis. Its function is as follows. Activates KDO (a required 8-carbon sugar) for incorporation into bacterial lipopolysaccharide in Gram-negative bacteria. The chain is 3-deoxy-manno-octulosonate cytidylyltransferase from Marinomonas sp. (strain MWYL1).